The chain runs to 121 residues: Prefoldin subunit beta (121 aa).

It belongs to the prefoldin subunit beta family. In terms of assembly, heterohexamer of two alpha and four beta subunits.

It localises to the cytoplasm. In terms of biological role, molecular chaperone capable of stabilizing a range of proteins. Seems to fulfill an ATP-independent, HSP70-like function in archaeal de novo protein folding. In Methanosphaerula palustris (strain ATCC BAA-1556 / DSM 19958 / E1-9c), this protein is Prefoldin subunit beta.